A 599-amino-acid polypeptide reads, in one-letter code: MSDLSHIRNFSIIAHIDHGKSTLADRFIQICGGLSEREMEAQVLDSMDLERERGITIKAHSVTLHYKAQDGKTYQLNFIDTPGHVDFTYEVSRSLAACEGALLVVDAGQGVEAQSVANCYTAIEQGLEVMPVLNKMDLPQAEPERVKDEIEHIIGIDAGDAVLCSAKSGMGVPDVLEHLVRVIPPPQGEIEAPLQALIIDSWFDNYLGVVSLVRVKHGRVKKGDKILVKSTGKVHQVDSVGVFTPKHTEMPDLKAGEVGFIIAGIKDIHGAPVGDTLTLSSTPNVDMLPGFQRIKPQVYAGLFPVSSDDFEDFREALQKLTLNDAALQYEPESSDALGFGFRIGFLGMLHMEIIQERLEREYDLDLITTAPTVVYEVLLKNGDTICVDNPSKLPDLASIAEMREPIVRANILVPQEHLGNVINLCIEKRGVQRDMQFLSSQVQISYDLPMNEVVLDFFDRLKSVSRGYASLDYSFDRFQVANLVKLDVLINGDKVDALALIVHRDKAHQKGRALTEKMKELIPRQMFDVAIQAAIGGQVVARTTVKALRKNVLAKCYGGDVTRKRKLLEKQKAGKKRMKQVGSVEIPQEAFLAVLKVDS.

The tr-type G domain occupies 5–187; it reads SHIRNFSIIA…HLVRVIPPPQ (183 aa). Residues 17 to 22 and 134 to 137 each bind GTP; these read DHGKST and NKMD.

This sequence belongs to the TRAFAC class translation factor GTPase superfamily. Classic translation factor GTPase family. LepA subfamily.

It localises to the cell inner membrane. It carries out the reaction GTP + H2O = GDP + phosphate + H(+). Its function is as follows. Required for accurate and efficient protein synthesis under certain stress conditions. May act as a fidelity factor of the translation reaction, by catalyzing a one-codon backward translocation of tRNAs on improperly translocated ribosomes. Back-translocation proceeds from a post-translocation (POST) complex to a pre-translocation (PRE) complex, thus giving elongation factor G a second chance to translocate the tRNAs correctly. Binds to ribosomes in a GTP-dependent manner. This is Elongation factor 4 from Azotobacter vinelandii (strain DJ / ATCC BAA-1303).